The following is a 335-amino-acid chain: Mycobacterial beta-ketoacyl-[acyl-carrier-protein] synthase III (335 aa).

Catalysis depends on residues Cys122 and His258. The segment at Gln259–Arg263 is ACP-binding. The active site involves Asn289.

The protein belongs to the thiolase-like superfamily. FabH family. In terms of assembly, homodimer.

It localises to the cytoplasm. The catalysed reaction is malonyl-[ACP] + dodecanoyl-CoA + H(+) = 3-oxotetradecanoyl-[ACP] + CO2 + CoA. The protein operates within lipid metabolism; fatty acid biosynthesis. Its pathway is lipid metabolism; mycolic acid biosynthesis. Catalyzes the condensation reaction of fatty acid synthesis by the addition to an acyl acceptor of two carbons from malonyl-ACP. Catalyzes the first condensation reaction which initiates fatty acid synthesis and may therefore play a role in governing the total rate of fatty acid production. Possesses both acetoacetyl-ACP synthase and acetyl transacylase activities. Its substrate specificity determines the biosynthesis of branched-chain and/or straight-chain of fatty acids. In Mycolicibacterium paratuberculosis (strain ATCC BAA-968 / K-10) (Mycobacterium paratuberculosis), this protein is Mycobacterial beta-ketoacyl-[acyl-carrier-protein] synthase III.